The chain runs to 156 residues: Transcription elongation factor GreA (156 aa).

The stretch at 8 to 75 (LTKEGYEKLK…ELENMLSKAE (68 aa)) forms a coiled coil.

Belongs to the GreA/GreB family.

In terms of biological role, necessary for efficient RNA polymerase transcription elongation past template-encoded arresting sites. The arresting sites in DNA have the property of trapping a certain fraction of elongating RNA polymerases that pass through, resulting in locked ternary complexes. Cleavage of the nascent transcript by cleavage factors such as GreA or GreB allows the resumption of elongation from the new 3'terminus. GreA releases sequences of 2 to 3 nucleotides. This Thermosipho melanesiensis (strain DSM 12029 / CIP 104789 / BI429) protein is Transcription elongation factor GreA.